The chain runs to 421 residues: ATP-dependent RNA helicase RhlB (421 aa).

The Q motif motif lies at 9-37 (QKFSDFALHPAVIEALEKKGFHNCTPIQA). In terms of domain architecture, Helicase ATP-binding spans 40-219 (LPLTLEGRDV…FEQMNNAEYV (180 aa)). An ATP-binding site is contributed by 53–60 (AQTGTGKT). The DEAD box motif lies at 165-168 (DEAD). One can recognise a Helicase C-terminal domain in the interval 245-390 (RLLQTLLEEE…VSKYNPDALM (146 aa)). The tract at residues 396–421 (PLRLTRARPGNGPRRNGPPRNRRRSG) is disordered. Residues 403–414 (RPGNGPRRNGPP) show a composition bias toward low complexity.

It belongs to the DEAD box helicase family. RhlB subfamily. Component of the RNA degradosome, which is a multiprotein complex involved in RNA processing and mRNA degradation.

The protein localises to the cytoplasm. The catalysed reaction is ATP + H2O = ADP + phosphate + H(+). DEAD-box RNA helicase involved in RNA degradation. Has RNA-dependent ATPase activity and unwinds double-stranded RNA. The sequence is that of ATP-dependent RNA helicase RhlB from Klebsiella pneumoniae subsp. pneumoniae (strain ATCC 700721 / MGH 78578).